The primary structure comprises 99 residues: Co-chaperonin GroES (99 aa).

Belongs to the GroES chaperonin family. In terms of assembly, heptamer of 7 subunits arranged in a ring. Interacts with the chaperonin GroEL.

Its subcellular location is the cytoplasm. Its function is as follows. Together with the chaperonin GroEL, plays an essential role in assisting protein folding. The GroEL-GroES system forms a nano-cage that allows encapsulation of the non-native substrate proteins and provides a physical environment optimized to promote and accelerate protein folding. GroES binds to the apical surface of the GroEL ring, thereby capping the opening of the GroEL channel. This is Co-chaperonin GroES from Rhodococcus erythropolis (strain PR4 / NBRC 100887).